A 313-amino-acid chain; its full sequence is tRNA dimethylallyltransferase (313 aa).

Residue 17–24 (GPTASGKT) coordinates ATP. Substrate is bound at residue 19 to 24 (TASGKT). 3 interaction with substrate tRNA regions span residues 42 to 45 (DSAL), 166 to 170 (QRLSR), and 247 to 252 (RCVGYR).

Belongs to the IPP transferase family. In terms of assembly, monomer. Mg(2+) serves as cofactor.

The enzyme catalyses adenosine(37) in tRNA + dimethylallyl diphosphate = N(6)-dimethylallyladenosine(37) in tRNA + diphosphate. Functionally, catalyzes the transfer of a dimethylallyl group onto the adenine at position 37 in tRNAs that read codons beginning with uridine, leading to the formation of N6-(dimethylallyl)adenosine (i(6)A). This is tRNA dimethylallyltransferase from Yersinia pseudotuberculosis serotype O:1b (strain IP 31758).